The primary structure comprises 95 residues: Small ribosomal subunit protein bS16 (95 aa).

It belongs to the bacterial ribosomal protein bS16 family.

The polypeptide is Small ribosomal subunit protein bS16 (Thermosipho melanesiensis (strain DSM 12029 / CIP 104789 / BI429)).